Here is a 493-residue protein sequence, read N- to C-terminus: GPI alpha-1,6-mannosyltransferase 2 (493 aa).

Topologically, residues 1–13 (MGLLDPSQKEVLR) are cytoplasmic. Residues 14 to 34 (FAVNCRILTLVLQALFNLIIP) form a helical membrane-spanning segment. Residues 35-77 (DHHADAFCPPRLAPSGSADQLVEGLLGGLSRWDAEHFLFIAEH) are Lumenal-facing. The chain crosses the membrane as a helical span at residues 78–98 (GYLYEHNFAFFPGFPLALLMG). At 99-113 (TELLRPLQGLLSQRS) the chain is on the cytoplasmic side. The chain crosses the membrane as a helical span at residues 114–134 (CLLVSVALLNLLFSVLAAVAL). Residues 135 to 136 (HD) lie on the Lumenal side of the membrane. A helical membrane pass occupies residues 137-157 (LGCLVLHCPRQALCAALLFCI). The Cytoplasmic segment spans residues 158–161 (SPAN). A helical membrane pass occupies residues 162–182 (VFLAAGYSEALFAFLTFSAMG). Residues 183 to 192 (QLERGRGWAS) are Lumenal-facing. Residues 193–213 (GLLFALAAGVRSNGLVSLGFL) traverse the membrane as a helical segment. At 214–234 (LHSQCRGFCSSLAVLSPWKPL) the chain is on the cytoplasmic side. A helical transmembrane segment spans residues 235-255 (VKLMASVCLSVLIVSLPFALF). Over 256–327 (QYRAYIQFCS…RYYELKQVPN (72 aa)) the chain is Lumenal. Residues 328–348 (FLLATPVTVLVVWATWTYVTT) form a helical membrane-spanning segment. The Cytoplasmic portion of the chain corresponds to 349 to 378 (HPWLCLTLGLQRTKDRENPEKPHRGFLSPK). The chain crosses the membrane as a helical span at residues 379–399 (VFVYLVHAAALLVFGGLCMHV). The Lumenal segment spans residues 400–469 (QVLTRFLASS…DWKRCSPVTR (70 aa)). The helical transmembrane segment at 470-490 (CVLVYFLTYWLLGLILHCNFL) threads the bilayer. Topologically, residues 491–493 (PWT) are cytoplasmic.

The protein belongs to the PIGV family. Not N-glycosylated.

The protein localises to the endoplasmic reticulum membrane. Its pathway is glycolipid biosynthesis; glycosylphosphatidylinositol-anchor biosynthesis. Its function is as follows. Alpha-1,6-mannosyltransferase that catalyzes the transfer of the second mannose, via an alpha-1,6 bond, from a dolichol-phosphate-mannose (Dol-P-Man) to the alpha-D-Man-(1-&gt;4)-alpha-D-GlcN-(1-&gt;6)-(1-radyl,2-acyl-sn-glycero-3-phospho)-2-acyl-inositol (also termed H2) intermediate to generate an alpha-D-Man-(1-&gt;6)-alpha-D-Man-(1-&gt;4)-alpha-D-GlcN-(1-&gt;6)-(1-radyl,2-acyl-sn-glycero-3-phospho)-2-acyl-inositol (also termed H3) and participates in the seventh step of the glycosylphosphatidylinositol-anchor biosynthesis. Also transfers the second mannose on a 2-PEtn-alpha-D-Man-(1-&gt;4)-alpha-D-GlcN-(1-&gt;6)-(1-radyl,2-acyl-sn-glycero-3-phospho)-2-acyl-inositol (also termed H5). The sequence is that of GPI alpha-1,6-mannosyltransferase 2 from Mus musculus (Mouse).